Here is a 563-residue protein sequence, read N- to C-terminus: Pyruvate decarboxylase isozyme 2 (563 aa).

Positions 28, 115, 157, and 224 each coordinate pyruvate. Thiamine diphosphate-binding positions include Thr390 and 413–415; that span reads GSI. Asp444 lines the Mg(2+) pocket. Residues 445 to 446 and 471 to 476 contribute to the thiamine diphosphate site; these read GS and NNGYTI. Mg(2+) contacts are provided by Asn471 and Gly473. Glu477 serves as a coordination point for pyruvate.

This sequence belongs to the TPP enzyme family. Homotetramer. It depends on Mg(2+) as a cofactor. Thiamine diphosphate serves as cofactor.

The protein resides in the cytoplasm. Its subcellular location is the nucleus. It catalyses the reaction pyruvate + H(+) = acetaldehyde + CO2. The enzyme catalyses 3-methyl-2-oxobutanoate + H(+) = 2-methylpropanal + CO2. It carries out the reaction (S)-3-methyl-2-oxopentanoate + H(+) = 2-methylbutanal + CO2. The catalysed reaction is indole-3-pyruvate + H(+) = indole-3-acetaldehyde + CO2. It catalyses the reaction 3-phenylpyruvate + H(+) = 2-phenylacetaldehyde + CO2. The enzyme catalyses 2-oxobutanoate + H(+) = propanal + CO2. It carries out the reaction 2-oxopentanoate + H(+) = butanal + CO2. The catalysed reaction is 2 acetaldehyde = acetoin. It catalyses the reaction acetaldehyde + pyruvate + H(+) = acetoin + CO2. It participates in fermentation; ethanol fermentation. It functions in the pathway amino-acid degradation; Ehrlich pathway. Allosterically activated by its substrate, pyruvate. In terms of biological role, second most abundant of three pyruvate decarboxylases (PDC1, PDC5, PDC6) implicated in the nonoxidative conversion of pyruvate to acetaldehyde and carbon dioxide during alcoholic fermentation. Most of the produced acetaldehyde is subsequently reduced to ethanol, but some is required for cytosolic acetyl-CoA production for biosynthetic pathways. The enzyme is also one of five 2-oxo acid decarboxylases (PDC1, PDC5, PDC6, ARO10, and THI3) able to decarboxylate more complex 2-oxo acids (alpha-keto-acids) than pyruvate, which seem mainly involved in amino acid catabolism. Here the enzyme catalyzes the decarboxylation of amino acids, which, in a first step, have been transaminated to the corresponding 2-oxo acids. In a third step, the resulting aldehydes are reduced to alcohols, collectively referred to as fusel oils or alcohols. Its preferred substrates are the transaminated amino acids derived from threonine (2-oxobutanoate), norvaline (2-oxopentanoate), valine (3-methyl-2-oxobutanoate, also alpha-keto-isovalerate), isoleucine ((3S)-3-methyl-2-oxopentanoate, also alpha-keto-beta-methylvalerate), phenylalanine (phenylpyruvate), and tryptophan (3-(indol-3-yl)pyruvate), whereas transaminated leucine is no substrate. In a side-reaction the carbanionic intermediate (or active aldehyde) generated by decarboxylation or by activation of an aldehyde can react with an aldehyde via condensation (or carboligation) yielding a 2-hydroxy ketone, collectively called acyloins. This Saccharomyces cerevisiae (strain ATCC 204508 / S288c) (Baker's yeast) protein is Pyruvate decarboxylase isozyme 2 (PDC5).